A 364-amino-acid polypeptide reads, in one-letter code: Ferrochelatase (364 aa).

Residues histidine 213 and glutamate 294 each contribute to the Fe cation site.

This sequence belongs to the ferrochelatase family.

Its subcellular location is the cytoplasm. The enzyme catalyses heme b + 2 H(+) = protoporphyrin IX + Fe(2+). The protein operates within porphyrin-containing compound metabolism; protoheme biosynthesis; protoheme from protoporphyrin-IX: step 1/1. Catalyzes the ferrous insertion into protoporphyrin IX. The sequence is that of Ferrochelatase from Chromobacterium violaceum (strain ATCC 12472 / DSM 30191 / JCM 1249 / CCUG 213 / NBRC 12614 / NCIMB 9131 / NCTC 9757 / MK).